We begin with the raw amino-acid sequence, 191 residues long: Shikimate kinase (191 aa).

24 to 29 (GSGKTS) contacts ATP. T28 contacts Mg(2+). Substrate contacts are provided by D46, R70, and G92. R130 contributes to the ATP binding site. R149 is a substrate binding site.

It belongs to the shikimate kinase family. As to quaternary structure, monomer. Requires Mg(2+) as cofactor.

It is found in the cytoplasm. It catalyses the reaction shikimate + ATP = 3-phosphoshikimate + ADP + H(+). Its pathway is metabolic intermediate biosynthesis; chorismate biosynthesis; chorismate from D-erythrose 4-phosphate and phosphoenolpyruvate: step 5/7. In terms of biological role, catalyzes the specific phosphorylation of the 3-hydroxyl group of shikimic acid using ATP as a cosubstrate. This Parasynechococcus marenigrum (strain WH8102) protein is Shikimate kinase.